The sequence spans 1625 residues: E3 ubiquitin-protein ligase KEG (1625 aa).

Residues 10 to 56 (CSVCHTRYNEDERVPLLLQCGHGFCKDCLSKMFSTSSDTTLTCPRCR) form an RING-type zinc finger. Acidic residues predominate over residues 91-106 (YTDDEDDDDEEDGSDE). Positions 91–110 (YTDDEDDDDEEDGSDEDGAR) are disordered. The Protein kinase domain maps to 141–427 (RQIGEESSSG…TFNAMLATFL (287 aa)). Residues 147 to 155 (SSSGGFGGV) and lysine 176 each bind ATP. 11 ANK repeats span residues 467–496 (DNPN…AGGG), 510–540 (DGQS…NVDI), 544–573 (DGDP…NVRS), 579–608 (SGPS…DPNA), 612–641 (EGET…SRSM), 647–676 (KCLT…PEEI), 685–720 (PVGT…DPTA), 725–754 (HGRT…NANI), 758–787 (HNTI…DCNI), 791–826 (EGDN…AVDV), and 832–863 (KTVR…HLSP).

Interacts with ABI5 and EDR1. In terms of processing, autophosphotylated and autoubiquitinated in vitro. Post-translationally, phosphorylation enhances self-ubiquitination. Autoubiquitinated in response to abscisic acid (ABA) and subsequently targeted to proteolysis. As to expression, expressed in all tissues of young seedlings. In flowering plants, only detected in the youngest part of the stem, anthers and the receptacle of immature siliques. Not found in mature leave, older parts of the stem, flower parts other than anthers or mature siliques.

It is found in the golgi apparatus. The protein resides in the trans-Golgi network. It localises to the early endosome. The enzyme catalyses L-seryl-[protein] + ATP = O-phospho-L-seryl-[protein] + ADP + H(+). The catalysed reaction is L-threonyl-[protein] + ATP = O-phospho-L-threonyl-[protein] + ADP + H(+). It catalyses the reaction S-ubiquitinyl-[E2 ubiquitin-conjugating enzyme]-L-cysteine + [acceptor protein]-L-lysine = [E2 ubiquitin-conjugating enzyme]-L-cysteine + N(6)-ubiquitinyl-[acceptor protein]-L-lysine.. Its pathway is protein modification; protein ubiquitination. In terms of biological role, mediates E2-dependent protein ubiquitination. Acts as a negative regulator of abscisic acid signaling. Required for ABI5 degradation, by mediating its ubiquitination. Together with EDR1, may regulate endocytic trafficking and/or the formation of signaling complexes on trans-Golgi network (TGN)/ early endosome (EE) vesicles during stress responses. This is E3 ubiquitin-protein ligase KEG (KEG) from Arabidopsis thaliana (Mouse-ear cress).